Consider the following 894-residue polypeptide: Protein translocase subunit SecA (894 aa).

ATP-binding positions include Q87, 105-109 (GEGKT), and D512. Residues 857 to 894 (FNLGDEPEAQQPVTSKKVGRNEPCPCGSGKKYKQCCGK) form a disordered region. Zn(2+) is bound by residues C880, C882, C891, and C892.

This sequence belongs to the SecA family. As to quaternary structure, monomer and homodimer. Part of the essential Sec protein translocation apparatus which comprises SecA, SecYEG and auxiliary proteins SecDF-YajC and YidC. Requires Zn(2+) as cofactor.

It localises to the cell inner membrane. Its subcellular location is the cytoplasm. The enzyme catalyses ATP + H2O + cellular proteinSide 1 = ADP + phosphate + cellular proteinSide 2.. Functionally, part of the Sec protein translocase complex. Interacts with the SecYEG preprotein conducting channel. Has a central role in coupling the hydrolysis of ATP to the transfer of proteins into and across the cell membrane, serving as an ATP-driven molecular motor driving the stepwise translocation of polypeptide chains across the membrane. The protein is Protein translocase subunit SecA of Geotalea uraniireducens (strain Rf4) (Geobacter uraniireducens).